The following is a 238-amino-acid chain: SH2 domain-containing adapter protein F (238 aa).

Disordered regions lie at residues 1-70 (MEPY…PWEW) and 85-121 (GSENCLSPGREEKGRLPPRLSAGNPKSAKPLGMEPSS). At Ser39 the chain carries Phosphoserine. A compositionally biased stretch (acidic residues) spans 55 to 66 (EDDERPPEEYDQ). Phosphotyrosine is present on Tyr64. Positions 138–233 (WYHGAISRTD…AEHMSLLYPV (96 aa)) constitute an SH2 domain.

As to quaternary structure, interacts with phosphorylated 'Tyr-720' of PDGFRA via its SH2 domain. Post-translationally, may become phosphorylated upon binding to PDGFRA.

Functionally, adapter protein which may play a role in the regulation of apoptosis in response to PDGF. This chain is SH2 domain-containing adapter protein F, found in Mus musculus (Mouse).